A 98-amino-acid polypeptide reads, in one-letter code: UPF0473 protein LSL_1108 (98 aa).

This sequence belongs to the UPF0473 family.

The protein is UPF0473 protein LSL_1108 of Ligilactobacillus salivarius (strain UCC118) (Lactobacillus salivarius).